Reading from the N-terminus, the 575-residue chain is Isocitrate dehydrogenase kinase/phosphatase (575 aa).

ATP contacts are provided by residues 315–321 (APGVKGM) and K336. Residue D371 is part of the active site.

It belongs to the AceK family.

Its subcellular location is the cytoplasm. It catalyses the reaction L-seryl-[isocitrate dehydrogenase] + ATP = O-phospho-L-seryl-[isocitrate dehydrogenase] + ADP + H(+). Its function is as follows. Bifunctional enzyme which can phosphorylate or dephosphorylate isocitrate dehydrogenase (IDH) on a specific serine residue. This is a regulatory mechanism which enables bacteria to bypass the Krebs cycle via the glyoxylate shunt in response to the source of carbon. When bacteria are grown on glucose, IDH is fully active and unphosphorylated, but when grown on acetate or ethanol, the activity of IDH declines drastically concomitant with its phosphorylation. This is Isocitrate dehydrogenase kinase/phosphatase from Yersinia pseudotuberculosis serotype I (strain IP32953).